The primary structure comprises 290 residues: Arylamine N-acetyltransferase 1 (290 aa).

An N-acetylmethionine modification is found at Met1. Cys68 serves as the catalytic Acyl-thioester intermediate. Position 103 (Ser103) interacts with CoA. 106-107 (IH) is a binding site for substrate. Residues His107 and Asp122 contribute to the active site. Tyr208 and Ser287 together coordinate CoA.

It belongs to the arylamine N-acetyltransferase family.

It is found in the cytoplasm. The enzyme catalyses an arylamine + acetyl-CoA = an N-acetylarylamine + CoA. In terms of biological role, participates in the detoxification of a plethora of hydrazine and arylamine drugs. The chain is Arylamine N-acetyltransferase 1 (NAT1) from Mesocricetus auratus (Golden hamster).